A 47-amino-acid polypeptide reads, in one-letter code: Potassium channel toxin gamma-KTx 5.2 (47 aa).

4 disulfide bridges follow: cysteine 5/cysteine 23, cysteine 11/cysteine 34, cysteine 20/cysteine 39, and cysteine 24/cysteine 41.

This sequence belongs to the ergtoxin family. Gamma-KTx 5 subfamily. As to expression, expressed by the venom gland.

Its subcellular location is the secreted. Its function is as follows. Reversibly blocks Kv11/ERG potassium channels. The polypeptide is Potassium channel toxin gamma-KTx 5.2 (Centruroides gracilis (Slenderbrown scorpion)).